The primary structure comprises 47 residues: Conotoxin Bu10 (47 aa).

The propeptide occupies 1-22 (DSRGTQLHRALRKATILSVSAR). Cystine bridges form between Cys23–Cys37, Cys30–Cys41, and Cys36–Cys46. At Cys46 the chain carries Cysteine amide.

This sequence belongs to the conotoxin O1 superfamily. Expressed by the venom duct.

It localises to the secreted. This chain is Conotoxin Bu10, found in Conus bullatus (Bubble cone).